Consider the following 643-residue polypeptide: MEDSSLDTLSIVNETDFPLYNNYTEPTIAPALIAVAPIAQYLATAIGKWAAKAAFSKVLSLIFPGSQPATMEKVRTEVETLINQKLSQDRVNILNAEYRGIIEVSDVFDAYIKQPGFTPATAKGYFLNLSGAIIQRLPQFEVQTYEGVSIALFTQMCTLHLTLLKDGILAGSAWGFTQADVDSFIKLFNQKVLDYRTRLMRMYTEEFGRLCKVSLKDGLTFRNMCNLYVFPFAEAWSLMRYEGLKLQSSLSLWDYVGVSIPVNYNEWGGLVYKLLMGEVNQRLTTVKFNYSFTNEPADIPARENIRGVHPIYDPSSGLTGWIGNGRTNNFNFADNNGNEIMEVRTQTFYQNPNNEPIAPRDIINQILTAPAPADLFFKNADINVKFTQWFQSTLYGWNIKLGTQTVLSSRTGTIPPNYLAYDGYYIRAISACPRGVSLAYNHDLTTLTYNRIEYDSPTTENIIVGFAPDNTKDFYSKKSHYLSETNDSYVIPALQFAEVSDRSFLEDTPDQATDGSIKFARTFISNEAKYSIRLNTGFNTATRYKLIIRVRVPYRLPAGIRVQSQNSGNNRMLGSFTANANPEWVDFVTDAFTFNDLGITTSSTNALFSISSDSLNSGEEWYLSQLFLVKESAFTTQINPLLK.

It belongs to the delta endotoxin family.

Its function is as follows. Promotes colloidosmotic lysis by binding to the midgut epithelial cells of mosquitos. The polypeptide is Pesticidal crystal protein Cry11Aa (cry11Aa) (Bacillus thuringiensis subsp. israelensis).